Here is a 444-residue protein sequence, read N- to C-terminus: Probable glycine dehydrogenase (decarboxylating) subunit 1 (444 aa).

The protein belongs to the GcvP family. N-terminal subunit subfamily. The glycine cleavage system is composed of four proteins: P, T, L and H. In this organism, the P 'protein' is a heterodimer of two subunits.

The enzyme catalyses N(6)-[(R)-lipoyl]-L-lysyl-[glycine-cleavage complex H protein] + glycine + H(+) = N(6)-[(R)-S(8)-aminomethyldihydrolipoyl]-L-lysyl-[glycine-cleavage complex H protein] + CO2. The glycine cleavage system catalyzes the degradation of glycine. The P protein binds the alpha-amino group of glycine through its pyridoxal phosphate cofactor; CO(2) is released and the remaining methylamine moiety is then transferred to the lipoamide cofactor of the H protein. In Moorella thermoacetica (strain ATCC 39073 / JCM 9320), this protein is Probable glycine dehydrogenase (decarboxylating) subunit 1.